We begin with the raw amino-acid sequence, 206 residues long: Dehydration-responsive element-binding protein 2D (206 aa).

The interval Ala13–Cys40 is disordered. The AP2/ERF DNA-binding region spans Thr41 to Pro98. Residues Arg102–Ser139 are disordered. Residues Thr107 to Ser139 show a composition bias toward low complexity.

This sequence belongs to the AP2/ERF transcription factor family. ERF subfamily.

The protein localises to the nucleus. Its function is as follows. Putative transcriptional activator that binds specifically to the DNA sequence 5'-[AG]CCGAC-3'. Binding to the C-repeat/DRE element mediates high salinity-inducible transcription. This Arabidopsis thaliana (Mouse-ear cress) protein is Dehydration-responsive element-binding protein 2D (DREB2D).